The chain runs to 291 residues: Maintenance of mitochondrial morphology protein 1 (291 aa).

Over 1-16 (MPNNYVFSLQPTFTQG) the chain is Lumenal. Residues 17-37 (LILGQLSILVLLGMILKFLFL) form a helical membrane-spanning segment. Over 38–291 (DSTQHPFESS…KKEMSDADLS (254 aa)) the chain is Cytoplasmic. One can recognise an SMP-LTD domain in the interval 73–277 (NAESAEWFNV…LPGLASVVDV (205 aa)).

This sequence belongs to the MMM1 family. Homodimer. Component of the ER-mitochondria encounter structure (ERMES) or MDM complex, composed of MMM1, MDM10, MDM12 and MDM34. An MMM1 homodimer associates with one molecule of MDM12 on each side in a pairwise head-to-tail manner, and the SMP-LTD domains of MMM1 and MDM12 generate a continuous hydrophobic tunnel for phospholipid trafficking.

It is found in the endoplasmic reticulum membrane. Its function is as follows. Component of the ERMES/MDM complex, which serves as a molecular tether to connect the endoplasmic reticulum (ER) and mitochondria. Components of this complex are involved in the control of mitochondrial shape and protein biogenesis, and function in nonvesicular lipid trafficking between the ER and mitochondria. The MDM12-MMM1 subcomplex functions in the major beta-barrel assembly pathway that is responsible for biogenesis of all outer membrane beta-barrel proteins, and acts in a late step after the SAM complex. The MDM10-MDM12-MMM1 subcomplex further acts in the TOM40-specific pathway after the action of the MDM12-MMM1 complex. Essential for establishing and maintaining the structure of mitochondria and maintenance of mtDNA nucleoids. This is Maintenance of mitochondrial morphology protein 1 from Laccaria bicolor (strain S238N-H82 / ATCC MYA-4686) (Bicoloured deceiver).